The chain runs to 384 residues: 8-amino-7-oxononanoate synthase (384 aa).

Arginine 21 is a binding site for substrate. A pyridoxal 5'-phosphate-binding site is contributed by 108–109; that stretch reads GF. A substrate-binding site is contributed by histidine 133. Positions 179, 207, and 233 each coordinate pyridoxal 5'-phosphate. Position 236 is an N6-(pyridoxal phosphate)lysine (lysine 236). Position 352 (threonine 352) interacts with substrate.

It belongs to the class-II pyridoxal-phosphate-dependent aminotransferase family. BioF subfamily. As to quaternary structure, homodimer. The cofactor is pyridoxal 5'-phosphate.

The enzyme catalyses 6-carboxyhexanoyl-[ACP] + L-alanine + H(+) = (8S)-8-amino-7-oxononanoate + holo-[ACP] + CO2. The protein operates within cofactor biosynthesis; biotin biosynthesis. Its function is as follows. Catalyzes the decarboxylative condensation of pimeloyl-[acyl-carrier protein] and L-alanine to produce 8-amino-7-oxononanoate (AON), [acyl-carrier protein], and carbon dioxide. This chain is 8-amino-7-oxononanoate synthase, found in Enterobacter sp. (strain 638).